A 666-amino-acid chain; its full sequence is UvrABC system protein B (666 aa).

In terms of domain architecture, Helicase ATP-binding spans 25–412 (EQVQAGAPYQ…EEQIVEQVIR (388 aa)). 38–45 (GATGTGKT) contributes to the ATP binding site. A Beta-hairpin motif is present at residues 91–114 (YYDYYQPEAYIPVTDTYIAKTASI). Residues 429-595 (QVDDLLAEIQ…PIIKRSSNAI (167 aa)) form the Helicase C-terminal domain. Residues 626–661 (PNLITQLEAQMKEAAKNLEFEEAAQYRDRIKKLRER) enclose the UVR domain.

It belongs to the UvrB family. Forms a heterotetramer with UvrA during the search for lesions. Interacts with UvrC in an incision complex.

It is found in the cytoplasm. Functionally, the UvrABC repair system catalyzes the recognition and processing of DNA lesions. A damage recognition complex composed of 2 UvrA and 2 UvrB subunits scans DNA for abnormalities. Upon binding of the UvrA(2)B(2) complex to a putative damaged site, the DNA wraps around one UvrB monomer. DNA wrap is dependent on ATP binding by UvrB and probably causes local melting of the DNA helix, facilitating insertion of UvrB beta-hairpin between the DNA strands. Then UvrB probes one DNA strand for the presence of a lesion. If a lesion is found the UvrA subunits dissociate and the UvrB-DNA preincision complex is formed. This complex is subsequently bound by UvrC and the second UvrB is released. If no lesion is found, the DNA wraps around the other UvrB subunit that will check the other stand for damage. This Synechococcus sp. (strain ATCC 27144 / PCC 6301 / SAUG 1402/1) (Anacystis nidulans) protein is UvrABC system protein B.